Reading from the N-terminus, the 371-residue chain is Chaperone protein DnaJ (371 aa).

The J domain maps to 5–70 (DYYEVLGVNR…QKRAAYDQYG (66 aa)). A disordered region spans residues 31–52 (KYHPDRNPDNPKAEESFKEAKE). Positions 32-52 (YHPDRNPDNPKAEESFKEAKE) are enriched in basic and acidic residues. Residues 132–210 (RTETKIRIPV…CQGAGRVKKH (79 aa)) form a CR-type zinc finger. Zn(2+) contacts are provided by Cys-145, Cys-148, Cys-162, Cys-165, Cys-184, Cys-187, Cys-198, and Cys-201. 4 CXXCXGXG motif repeats span residues 145 to 152 (CETCHGSG), 162 to 169 (CTTCGGHG), 184 to 191 (CPKCHGSG), and 198 to 205 (CPSCQGAG).

This sequence belongs to the DnaJ family. As to quaternary structure, homodimer. Zn(2+) is required as a cofactor.

It is found in the cytoplasm. Its function is as follows. Participates actively in the response to hyperosmotic and heat shock by preventing the aggregation of stress-denatured proteins and by disaggregating proteins, also in an autonomous, DnaK-independent fashion. Unfolded proteins bind initially to DnaJ; upon interaction with the DnaJ-bound protein, DnaK hydrolyzes its bound ATP, resulting in the formation of a stable complex. GrpE releases ADP from DnaK; ATP binding to DnaK triggers the release of the substrate protein, thus completing the reaction cycle. Several rounds of ATP-dependent interactions between DnaJ, DnaK and GrpE are required for fully efficient folding. Also involved, together with DnaK and GrpE, in the DNA replication of plasmids through activation of initiation proteins. The polypeptide is Chaperone protein DnaJ (Methylovorus sp. (strain SS1 / DSM 11726)).